A 396-amino-acid chain; its full sequence is Dual specificity mitogen-activated protein kinase kinase dSOR1 (396 aa).

Positions 25–44 (APTPPFKTPSGTDTHSLLGK) are disordered. The Protein kinase domain maps to 87–364 (LEKLGELGSG…LKTLLSHPWI (278 aa)). ATP-binding positions include 93 to 101 (LGSGNGGVV) and Lys-116. Catalysis depends on Asp-209, which acts as the Proton acceptor. Ser-237 and Ser-241 each carry phosphoserine; by RAF.

Belongs to the protein kinase superfamily. STE Ser/Thr protein kinase family. MAP kinase kinase subfamily. Interacts with Raf and ksr; Dsor1 binding to ksr probably promotes ksr and Raf dimerization and ksr-mediated Raf transactivation. In terms of processing, phosphorylation on Ser/Thr by MAP kinase kinase kinases regulates positively the kinase activity.

It catalyses the reaction L-seryl-[protein] + ATP = O-phospho-L-seryl-[protein] + ADP + H(+). The catalysed reaction is L-threonyl-[protein] + ATP = O-phospho-L-threonyl-[protein] + ADP + H(+). The enzyme catalyses L-tyrosyl-[protein] + ATP = O-phospho-L-tyrosyl-[protein] + ADP + H(+). In terms of biological role, required downstream of Raf in the sevenless (sev), torso (tor), and Drosophila EGF receptor homolog (DER) signal transduction pathways. Involved in both positive regulation (at the posterior terminus) and negative regulation (at the anterior domain) of tll, as in other terminal class gene products, maybe via the ERK-A kinase. In Drosophila melanogaster (Fruit fly), this protein is Dual specificity mitogen-activated protein kinase kinase dSOR1 (Dsor1).